The following is a 443-amino-acid chain: Proline--tRNA ligase (443 aa).

Belongs to the class-II aminoacyl-tRNA synthetase family. ProS type 2 subfamily. Homodimer.

The protein resides in the cytoplasm. The enzyme catalyses tRNA(Pro) + L-proline + ATP = L-prolyl-tRNA(Pro) + AMP + diphosphate. Functionally, catalyzes the attachment of proline to tRNA(Pro) in a two-step reaction: proline is first activated by ATP to form Pro-AMP and then transferred to the acceptor end of tRNA(Pro). In Zymomonas mobilis subsp. mobilis (strain ATCC 10988 / DSM 424 / LMG 404 / NCIMB 8938 / NRRL B-806 / ZM1), this protein is Proline--tRNA ligase.